The following is a 151-amino-acid chain: Calcium-binding protein SPEC 2C (151 aa).

4 EF-hand domains span residues 10 to 45 (EQRKVFKSSFKSIDADGDGKITPEELKAAFKSIEIE), 46 to 78 (LTQEKIDEMMSMVDKDGSRPVDFSEILMKKAEQ), 81 to 116 (GKGAQYFKAFDALDTDKSGSLSPEELRTALSACTDP), and 118 to 151 (MTKEEIDAIIKKADGNNDGEIRRAEFVRMIQSSY). Ca(2+)-binding residues include Asp23, Asp25, Asp27, Lys29, Glu34, Asp59, Asp61, Ser63, Glu70, Asp94, Asp96, Ser98, Ser100, Glu105, Asp131, Asp135, Glu137, and Glu142.

Found in cell lineages giving rise to the aboral ectoderm, a squamous epithelium covering the surface of the late stage embryo and larva.

Functionally, calcium-binding protein involved in larval development and metamorphosis. Likely to function as calcium buffers mediating the transport of calcium from the sea water to the blastocoel where calcium is required for skeleton formation. The sequence is that of Calcium-binding protein SPEC 2C (SPEC2C) from Strongylocentrotus purpuratus (Purple sea urchin).